The primary structure comprises 61 residues: Metallothionein-2A (61 aa).

An N-acetylmethionine modification is found at Met-1. The interval 1-29 is beta; it reads MDPNCSCAAGGSCTCAGSCKCKDCKCTSC. Cys-5, Cys-7, Cys-13, Cys-15, Cys-19, Cys-21, Cys-24, Cys-26, Cys-29, Cys-33, Cys-34, Cys-36, Cys-37, Cys-41, Cys-44, Cys-48, Cys-50, and Cys-57 together coordinate a divalent metal cation. The interval 30–61 is alpha; that stretch reads KKSCCSCCPVGCAKCAQGCICKGASDKCSCCA. Ser-58 carries the phosphoserine modification. A divalent metal cation contacts are provided by Cys-59 and Cys-60.

It belongs to the metallothionein superfamily. Type 1 family. Interacts with EOLA1.

Its function is as follows. Metallothioneins have a high content of cysteine residues that bind various heavy metals; these proteins are transcriptionally regulated by both heavy metals and glucocorticoids. The chain is Metallothionein-2A (MT2A) from Sus scrofa (Pig).